A 388-amino-acid chain; its full sequence is LL-diaminopimelate aminotransferase (388 aa).

5 residues coordinate substrate: tyrosine 13, glycine 38, lysine 102, tyrosine 126, and asparagine 176. Residues serine 101–lysine 102, tyrosine 126, asparagine 176, tyrosine 207, and serine 235–serine 237 each bind pyridoxal 5'-phosphate. Position 238 is an N6-(pyridoxal phosphate)lysine (lysine 238). Position 246 (arginine 246) interacts with pyridoxal 5'-phosphate. Position 364 (arginine 364) interacts with substrate.

It belongs to the class-I pyridoxal-phosphate-dependent aminotransferase family. LL-diaminopimelate aminotransferase subfamily. In terms of assembly, homodimer. Requires pyridoxal 5'-phosphate as cofactor.

The catalysed reaction is (2S,6S)-2,6-diaminopimelate + 2-oxoglutarate = (S)-2,3,4,5-tetrahydrodipicolinate + L-glutamate + H2O + H(+). Its pathway is amino-acid biosynthesis; L-lysine biosynthesis via DAP pathway; LL-2,6-diaminopimelate from (S)-tetrahydrodipicolinate (aminotransferase route): step 1/1. Its function is as follows. Involved in the synthesis of meso-diaminopimelate (m-DAP or DL-DAP), required for both lysine and peptidoglycan biosynthesis. Catalyzes the direct conversion of tetrahydrodipicolinate to LL-diaminopimelate. This chain is LL-diaminopimelate aminotransferase, found in Dehalococcoides mccartyi (strain ATCC BAA-2266 / KCTC 15142 / 195) (Dehalococcoides ethenogenes (strain 195)).